Here is a 562-residue protein sequence, read N- to C-terminus: MFS-type efflux pump elcC (562 aa).

Transmembrane regions (helical) follow at residues 50–70, 80–100, 111–131, 139–159, 184–204, 215–235, 257–277, 288–308, 309–329, 351–371, and 383–403; these read WVFLIALALFEIGSLICGAAP, VVAGIGSGGLFAGAILLVAEF, GMLGAMYSVASVAGPLMGGAF, LCFYINLPLGVVTAVIVFLLV, LYGLVVLVPTIICILLATQWG, IIALFVVGFVLFVAFVVIEIW, IFSFCLFGSFLVVAYFLPLWF, SGIHNLPSILGTTIFSVAAGG, MVFGLGYYTWACILGSVLAAV, VLYGAGCGFGLNQPLIAIQAA, and VVIFMQTFGGTIAIAVAQNVF. A glycan (N-linked (GlcNAc...) asparagine) is linked at asparagine 448. Residues 455 to 475 traverse the membrane as a helical segment; sequence FYVAVATAGLSMAGSILIPWL. The interval 515 to 562 is disordered; sequence EIASEDSQSSDIEKVPRNNEVSTYDSQTSEVEKSSVGSTNRKVESIRN. The span at 533 to 554 shows a compositional bias: polar residues; sequence NEVSTYDSQTSEVEKSSVGSTN.

The protein belongs to the major facilitator superfamily. TCR/Tet family.

It localises to the cell membrane. In terms of biological role, MFS-type efflux pump; part of the gene cluster that mediates the biosynthesis of elsinochrome C, a perelyenequinone phytotoxin structurally similar to cercosporin. The protein is MFS-type efflux pump elcC of Phaeosphaeria nodorum (strain SN15 / ATCC MYA-4574 / FGSC 10173) (Glume blotch fungus).